Reading from the N-terminus, the 140-residue chain is Phosphatidylinositol N-acetylglucosaminyltransferase subunit GPI19 (140 aa).

The Cytoplasmic portion of the chain corresponds to 1-12; that stretch reads MYTKEYYWFSQY. Residues 13–33 traverse the membrane as a helical segment; that stretch reads MIITSTLVLTIIWSILPSSLG. At 34 to 52 the chain is on the lumenal side; it reads EAAPKQFINTLLDIFPQRR. The helical transmembrane segment at 53–73 threads the bilayer; that stretch reads WIITLESIMLMGMLCTYIGLL. Residues 74-140 lie on the Cytoplasmic side of the membrane; it reads MYNEDTLTPP…YLYDNDHTST (67 aa).

This sequence belongs to the GPI19 family. As to quaternary structure, component of the phosphatidylinositol N-acetylglucosaminyltransferase (GPI-GlcNAc transferase) complex composed of at least GPI1, GPI2, GPI3, GPI15, GPI19 and ERI1. Interacts with GPI2.

Its subcellular location is the endoplasmic reticulum membrane. The catalysed reaction is a 1,2-diacyl-sn-glycero-3-phospho-(1D-myo-inositol) + UDP-N-acetyl-alpha-D-glucosamine = a 6-(N-acetyl-alpha-D-glucosaminyl)-1-(1,2-diacyl-sn-glycero-3-phospho)-1D-myo-inositol + UDP + H(+). It functions in the pathway glycolipid biosynthesis; glycosylphosphatidylinositol-anchor biosynthesis. In terms of biological role, part of the complex catalyzing the transfer of N-acetylglucosamine from UDP-N-acetylglucosamine to phosphatidylinositol, the first step of GPI biosynthesis. Involved in cell wall biosynthesis. The sequence is that of Phosphatidylinositol N-acetylglucosaminyltransferase subunit GPI19 (GPI19) from Saccharomyces cerevisiae (strain ATCC 204508 / S288c) (Baker's yeast).